The chain runs to 652 residues: Coiled-coil domain-containing protein 81 (652 aa).

Phosphoserine is present on serine 206. Residues 238-256 (KCKLKDQSDKEEGTRDISS) show a composition bias toward basic and acidic residues. The interval 238 to 258 (KCKLKDQSDKEEGTRDISSPK) is disordered. 3 positions are modified to phosphoserine: serine 275, serine 296, and serine 417. Residues 436 to 493 (MDNRQENEIKQRQYRELMDRLEQVQLTEELAAQRAKFLKDKMEETQCYKRALDAQIKN) are a coiled coil.

The protein resides in the cytoplasm. The protein localises to the cytoskeleton. It is found in the microtubule organizing center. Its subcellular location is the centrosome. The polypeptide is Coiled-coil domain-containing protein 81 (CCDC81) (Homo sapiens (Human)).